We begin with the raw amino-acid sequence, 438 residues long: tRNA-2-methylthio-N(6)-dimethylallyladenosine synthase (438 aa).

The 117-residue stretch at 2–118 (KSFYLETFGC…LADMVRDAEL (117 aa)) folds into the MTTase N-terminal domain. The [4Fe-4S] cluster site is built by Cys11, Cys47, Cys81, Cys157, Cys161, and Cys164. The Radical SAM core domain maps to 143–373 (PSAEVSRFVT…LALQEEITRQ (231 aa)). The TRAM domain maps to 376-438 (QMDIGQVLPV…YRNSHLGERV (63 aa)).

Belongs to the methylthiotransferase family. MiaB subfamily. Monomer. The cofactor is [4Fe-4S] cluster.

The protein localises to the cytoplasm. The enzyme catalyses N(6)-dimethylallyladenosine(37) in tRNA + (sulfur carrier)-SH + AH2 + 2 S-adenosyl-L-methionine = 2-methylsulfanyl-N(6)-dimethylallyladenosine(37) in tRNA + (sulfur carrier)-H + 5'-deoxyadenosine + L-methionine + A + S-adenosyl-L-homocysteine + 2 H(+). Catalyzes the methylthiolation of N6-(dimethylallyl)adenosine (i(6)A), leading to the formation of 2-methylthio-N6-(dimethylallyl)adenosine (ms(2)i(6)A) at position 37 in tRNAs that read codons beginning with uridine. The sequence is that of tRNA-2-methylthio-N(6)-dimethylallyladenosine synthase from Syntrophotalea carbinolica (strain DSM 2380 / NBRC 103641 / GraBd1) (Pelobacter carbinolicus).